The primary structure comprises 376 residues: Lactosylceramide 1,3-N-acetyl-beta-D-glucosaminyltransferase (376 aa).

At 1 to 13 the chain is on the cytoplasmic side; the sequence is MRLFVSRRVKRWK. Residues 14–34 form a helical; Signal-anchor for type II membrane protein membrane-spanning segment; sequence IFHFFVTCFILSFMVFWSPIN. Residues 35 to 376 are Lumenal-facing; it reads NYIMSHMKSY…NSYPCWAAFA (342 aa). A glycan (N-linked (GlcNAc...) asparagine) is linked at asparagine 57.

The protein belongs to the glycosyltransferase 31 family. As to expression, highly expressed in adult spleen, placenta and cerebellar Purkinje cells where it colocalizes with HNK-1. Expressed at lower level in brain, lung, thymus and muscle.

It is found in the golgi apparatus membrane. It catalyses the reaction a beta-D-Gal-(1-&gt;4)-beta-D-Glc-(1&lt;-&gt;1)-Cer(d18:1(4E)) + UDP-N-acetyl-alpha-D-glucosamine = a beta-D-GlcNAc-(1-&gt;3)-beta-D-Gal-(1-&gt;4)-beta-D-Glc-(1&lt;-&gt;1)-Cer(d18:1(4E)) + UDP + H(+). The enzyme catalyses a neolactoside nLc4Cer(d18:1(4E)) + UDP-N-acetyl-alpha-D-glucosamine = a neolactoside IV(3)-beta-GlcNAc-nLc4Cer(d18:1(4E)) + UDP + H(+). Its pathway is protein modification; protein glycosylation. Its function is as follows. Beta-1,3-N-acetylglucosaminyltransferase that plays a key role in the synthesis of lacto- or neolacto-series carbohydrate chains on glycolipids, notably by participating in biosynthesis of HNK-1 and Lewis X carbohydrate structures. Has strong activity toward lactosylceramide (LacCer) and neolactotetraosylceramide (nLc(4)Cer; paragloboside), resulting in the synthesis of Lc(3)Cer and neolactopentaosylceramide (nLc(5)Cer), respectively. Plays a central role in regulating neolacto-series glycolipid synthesis during embryonic development. The protein is Lactosylceramide 1,3-N-acetyl-beta-D-glucosaminyltransferase of Mus musculus (Mouse).